The chain runs to 429 residues: Adenylosuccinate synthetase (429 aa).

Residues 12–18 (GDEGKGK) and 40–42 (GHT) contribute to the GTP site. D13 (proton acceptor) is an active-site residue. Mg(2+) contacts are provided by D13 and G40. IMP is bound by residues 13-16 (DEGK), 38-41 (NAGH), T128, R142, Q223, T238, and R302. H41 serves as the catalytic Proton donor. 298–304 (TVTGRPR) contacts substrate. GTP-binding positions include R304, 330–332 (LLD), and 412–414 (SVG).

Belongs to the adenylosuccinate synthetase family. Homodimer. Mg(2+) serves as cofactor.

Its subcellular location is the cytoplasm. The catalysed reaction is IMP + L-aspartate + GTP = N(6)-(1,2-dicarboxyethyl)-AMP + GDP + phosphate + 2 H(+). It functions in the pathway purine metabolism; AMP biosynthesis via de novo pathway; AMP from IMP: step 1/2. Functionally, plays an important role in the de novo pathway of purine nucleotide biosynthesis. Catalyzes the first committed step in the biosynthesis of AMP from IMP. This chain is Adenylosuccinate synthetase, found in Lactobacillus johnsonii (strain CNCM I-12250 / La1 / NCC 533).